The following is a 1346-amino-acid chain: Zinc finger protein 541 (1346 aa).

Disordered stretches follow at residues 1-34 (MDQY…DTLN) and 113-136 (EADE…SSPQ). The span at 21-32 (FSESQGLNCSDT) shows a compositional bias: polar residues. C2H2-type zinc fingers lie at residues 140-162 (LDCS…YLTH), 168-190 (HVCK…MLTH), and 196-220 (FVCI…YEVH). Disordered stretches follow at residues 235 to 271 (ACGD…LLPH), 283 to 328 (VHQK…AAPA), 437 to 472 (SAVP…EDAL), and 578 to 744 (SQLP…GGYR). 2 stretches are compositionally biased toward low complexity: residues 294-323 (PAGA…PAGP) and 440-458 (PSRE…SPSE). Polar residues predominate over residues 671-685 (PDISSLAKQLRSSKG). The C2H2-type 4 zinc-finger motif lies at 838 to 860 (FVCKNCSQMFYTEKGLSSHMCFH). Positions 931-971 (AMGQEKDGEERDSKESSQQRKRKKRPPPSTAGEPGPAGCHQ) are disordered. Positions 934–948 (QEKDGEERDSKESSQ) are enriched in basic and acidic residues. An ELM2 domain is found at 1053–1145 (PHINIGSRFQ…VALETLLLRG (93 aa)). The SANT domain occupies 1160–1211 (TGSDVWTPIEKRLFKKAFYAHKKDFYLIHKMIQTKTVAQCVEYYYIWKKMIK). A disordered region spans residues 1224-1281 (VKREPEEVERTEEKVPCSPRERPSHHPTPKLKTKSYRRESILSSSPNAGSKRTPELLG). Residues 1234 to 1247 (TEEKVPCSPRERPS) show a composition bias toward basic and acidic residues. Residues 1248–1258 (HHPTPKLKTKS) are compositionally biased toward basic residues. The span at 1264 to 1273 (ILSSSPNAGS) shows a compositional bias: polar residues. The segment at 1289–1311 (FPCRECERVFDKIKSRNAHMKRH) adopts a C2H2-type 5 zinc-finger fold.

As to quaternary structure, interacts with DNTTIP1. Identified in a complex with KCDT19, HDAC1 and HSPA2. Component of a histone deacetylase complex containing DNTTIP1, ZNF541, HDAC1 and HDAC2. Identified in a complex with HDAC1, HDAC2, DNTTIP1 and KCTD19.

Its subcellular location is the nucleus. Its function is as follows. Transcription regulator which is essential for male fertility and for the completion of meiotic prophase in spermatocytes. Regulates progression of the pachytene stage of meiotic prophase by activating the expression of genes involved in meiosis during spermatogenesis. Maintains the repression of pre-pachytene transcriptional programs, including meiotic double-strand breaks (DSB) formation genes in pachytene spermatocytes and suppresses aberrant DSB formation after mid-pachytene, thus ensuring meiosis progression. This chain is Zinc finger protein 541 (ZNF541), found in Homo sapiens (Human).